Reading from the N-terminus, the 274-residue chain is Transcriptional activator PerA (274 aa).

In terms of domain architecture, HTH araC/xylS-type spans 168–265; that stretch reads DRVIKVIELD…NTTPKKYNGV (98 aa). 2 DNA-binding regions (H-T-H motif) span residues 185-206 and 232-255; these read GDVSSSMFMSDSCLRKQLNKEN and IDEISCLVGFNSTSYFIKVFKEYY.

In terms of biological role, could help in the transcriptional activator of eaeA expression in enteropathogenic E.coli. However, it seems that it is PerC which acts as an activator. The chain is Transcriptional activator PerA (perA) from Escherichia coli O127:H6 (strain E2348/69 / EPEC).